A 120-amino-acid chain; its full sequence is NAD(P)H-quinone oxidoreductase subunit 3 (120 aa).

A run of 3 helical transmembrane segments spans residues 6-26 (GYDA…LALV), 64-84 (MFAL…PWAV), and 89-109 (LGLL…VALA).

This sequence belongs to the complex I subunit 3 family. In terms of assembly, NDH-1 can be composed of about 15 different subunits; different subcomplexes with different compositions have been identified which probably have different functions.

Its subcellular location is the cellular thylakoid membrane. It carries out the reaction a plastoquinone + NADH + (n+1) H(+)(in) = a plastoquinol + NAD(+) + n H(+)(out). It catalyses the reaction a plastoquinone + NADPH + (n+1) H(+)(in) = a plastoquinol + NADP(+) + n H(+)(out). NDH-1 shuttles electrons from an unknown electron donor, via FMN and iron-sulfur (Fe-S) centers, to quinones in the respiratory and/or the photosynthetic chain. The immediate electron acceptor for the enzyme in this species is believed to be plastoquinone. Couples the redox reaction to proton translocation, and thus conserves the redox energy in a proton gradient. Cyanobacterial NDH-1 also plays a role in inorganic carbon-concentration. The polypeptide is NAD(P)H-quinone oxidoreductase subunit 3 (Synechococcus sp. (strain CC9902)).